Here is a 99-residue protein sequence, read N- to C-terminus: Putative type 4B encapsulin shell protein PF1875 (99 aa).

It belongs to the encapsulin family. Family 4B subfamily. May self-assemble into facets and potentially into larger complexes.

The protein resides in the encapsulin nanocompartment. Functionally, may be the encapsulin shell protein in a type 4 A-domain encapsulin nanocompartment system. Its cargo may be upstream glyceraldehyde-3-phosphate dehydrogenase (AC P61879). The protein is Putative type 4B encapsulin shell protein PF1875 of Pyrococcus furiosus (strain ATCC 43587 / DSM 3638 / JCM 8422 / Vc1).